A 345-amino-acid chain; its full sequence is Esterase (345 aa).

The N-terminal stretch at 1 to 39 is a signal peptide; sequence MSSAMRKTTNSPVVRRLTAAAVALGSCLALAGPAGSAGA. 3 disulfide bridges follow: cysteine 73–cysteine 103, cysteine 156–cysteine 180, and cysteine 236–cysteine 294.

It is found in the secreted. The sequence is that of Esterase (estA) from Streptomyces scabiei.